Consider the following 480-residue polypeptide: ATP-grasp enzyme ankG (480 aa).

The disordered stretch occupies residues 1–30 (MYQISLKATKSAAEPTSSTDASHDDRQVER). Basic and acidic residues predominate over residues 21–30 (ASHDDRQVER).

It catalyses the reaction NK13650 D + L-aspartate + ATP = NK13650 C + AMP + diphosphate + H(+). The catalysed reaction is NK13650 B + L-aspartate + ATP = NK13650 A + AMP + diphosphate + H(+). The protein operates within secondary metabolite biosynthesis. ATP-grasp enzyme; part of the ank cluster that mediates the biosynthesis of NK13650 C, a highly modified cyclo-arginine-tyrosine dipeptide. AnkG catalyzes the last step of the pathway via amidation NK13650 D with L-Asp to produce NK13650 C. AnkG also amidates NK13650 B into NK13650 A. Within the pathway, the cyclodipeptide synthase ankA acts as the scaffold-generating enzyme and is responsible for formation of the cyclo-Arg-Tyr diketopiperazine (cRY) from L-Arg and L-Tyr. The ankA product cRY is desaturated by the cytochrome P450 monooxygenase ankB to yield a dehydro-cyclodipeptide intermediate. The FAD-dependent monooxygenase ankC then installs the m-OH, ankD catalyzes the attachment of L-homoserine, and ankE ligates citrate to the ankD product to yield NK13650 B. The O-methyltransferase ankF is responsible for methylation of the C-17 phenol group of NK13650 B to produce NK13650 D. Amidation of NK13650 D with L-Asp by ankG then leads to the production of NK13650 C, whereas amidation of NK13650 B produces NK13650 A. This chain is ATP-grasp enzyme ankG, found in Aspergillus thermomutatus (Neosartorya pseudofischeri).